A 585-amino-acid chain; its full sequence is BURP domain-containing protein 17 (585 aa).

A signal peptide spans 1–20; the sequence is MDRIFARFFCFLLIAAVSHA. Residues 63–82 are disordered; sequence GQRNYKSSVSHVAERSHRVD. The region spanning 363-584 is the BURP domain; sequence FFLEKNLQQG…QPDAVVWTRR (222 aa).

In terms of tissue distribution, expressed in leaves.

This is BURP domain-containing protein 17 (BURP17) from Oryza sativa subsp. japonica (Rice).